The sequence spans 283 residues: Elongation factor Ts (283 aa).

An involved in Mg(2+) ion dislocation from EF-Tu region spans residues 80–83; it reads TDFV.

This sequence belongs to the EF-Ts family.

It is found in the cytoplasm. Its function is as follows. Associates with the EF-Tu.GDP complex and induces the exchange of GDP to GTP. It remains bound to the aminoacyl-tRNA.EF-Tu.GTP complex up to the GTP hydrolysis stage on the ribosome. This Serratia proteamaculans (strain 568) protein is Elongation factor Ts.